A 620-amino-acid chain; its full sequence is Notoamide biosynthesis transcriptional activator notL' (620 aa).

Residues 1–26 (MPPSSKSRRLPPAASDSAASDAQKRR) are disordered. The zn(2)-C6 fungal-type DNA-binding region spans 33-59 (CSACKARKLKCTGAPPCANCVKSRIEC). The tract at residues 591 to 620 (ETGAFFLDPDQPSGNSTPIKSETPEGTAIS) is disordered.

The protein resides in the nucleus. Functionally, transcription factor that probably regulates the expression of the gene cluster that mediates the biosynthesis of notoamide, a fungal indole alkaloid that belongs to a family of natural products containing a characteristic bicyclo[2.2.2]diazaoctane core. The protein is Notoamide biosynthesis transcriptional activator notL' of Aspergillus versicolor.